The chain runs to 295 residues: Tyrosine recombinase XerC (295 aa).

In terms of domain architecture, Core-binding (CB) spans 1-84 (MTLEEQFLSY…SLKSFYRLLT (84 aa)). A Tyr recombinase domain is found at 105-289 (KLPEFFYQDE…SMQHLTAEYR (185 aa)). Active-site residues include Arg145, Lys169, His241, Arg244, and His267. Catalysis depends on Tyr276, which acts as the O-(3'-phospho-DNA)-tyrosine intermediate.

The protein belongs to the 'phage' integrase family. XerC subfamily. In terms of assembly, forms a cyclic heterotetrameric complex composed of two molecules of XerC and two molecules of XerD.

The protein resides in the cytoplasm. Its function is as follows. Site-specific tyrosine recombinase, which acts by catalyzing the cutting and rejoining of the recombining DNA molecules. The XerC-XerD complex is essential to convert dimers of the bacterial chromosome into monomers to permit their segregation at cell division. It also contributes to the segregational stability of plasmids. The protein is Tyrosine recombinase XerC of Lactobacillus leichmannii.